The following is a 506-amino-acid chain: Maturase K (506 aa).

It belongs to the intron maturase 2 family. MatK subfamily.

The protein localises to the plastid. The protein resides in the chloroplast. In terms of biological role, usually encoded in the trnK tRNA gene intron. Probably assists in splicing its own and other chloroplast group II introns. This is Maturase K from Mimosa pudica (Sensitive plant).